We begin with the raw amino-acid sequence, 212 residues long: ER lumen protein-retaining receptor (212 aa).

The Lumenal portion of the chain corresponds to 1-2 (MN). Residues 3–21 (IFRFAGDLSHVFAIIILLL) form a helical membrane-spanning segment. Over 22-35 (KIWKTRSCAGISGK) the chain is Cytoplasmic. A helical membrane pass occupies residues 36 to 53 (SQILFAVVYLTRYLDLFT). Topologically, residues 54–61 (TYVSLYNS) are lumenal. A helical membrane pass occupies residues 62-80 (VMKVLFLATSGATVYLMYV). The Cytoplasmic portion of the chain corresponds to 81–96 (KFKATYDHNHDSFRIE). The chain crosses the membrane as a helical span at residues 97-110 (FLLVPCALLSLVIN). Residues 111–117 (HEFTVME) are Lumenal-facing. Residues 118 to 137 (VLWTFSIYLESVAILPQLFL) form a helical membrane-spanning segment. Residues 138–149 (VSRTGEAESITS) are Cytoplasmic-facing. The chain crosses the membrane as a helical span at residues 150-168 (HYLFALGSYRALYLLNWVY). The Lumenal segment spans residues 169–178 (RYMVESHYDL). Residues 179-199 (IAIFAGVVQTVLYCDFFYLYI) traverse the membrane as a helical segment. Topologically, residues 200-212 (TKVLKGKKLQLPA) are cytoplasmic.

It belongs to the ERD2 family.

The protein resides in the endoplasmic reticulum membrane. Required for the retention of luminal endoplasmic reticulum proteins. Determines the specificity of the luminal ER protein retention system. Also required for normal vesicular traffic through the Golgi. The sequence is that of ER lumen protein-retaining receptor (KdelR) from Drosophila melanogaster (Fruit fly).